A 334-amino-acid chain; its full sequence is Cathepsin R (334 aa).

A signal peptide spans 1–17 (MAAVVFIAFLYLGVASG). Residues 18–114 (VPVLDSSLDA…SIMKREAGSI (97 aa)) constitute a propeptide, activation peptide. Disulfide bonds link Cys136–Cys179 and Cys170–Cys212. Residue Cys139 is part of the active site. Asn269 carries N-linked (GlcNAc...) asparagine glycosylation. A disulfide bond links Cys270 and Cys323. Residues His277 and Asn301 contribute to the active site.

It belongs to the peptidase C1 family. As to expression, placenta.

The protein resides in the lysosome. This is Cathepsin R (Ctsr) from Mus musculus (Mouse).